Reading from the N-terminus, the 562-residue chain is Putative transport protein ECA2683 (562 aa).

The next 6 helical transmembrane spans lie at 8 to 28, 32 to 52, 66 to 86, 93 to 113, 116 to 136, and 158 to 178; these read LLNG…LCLG, LGPV…LLGQ, FMLF…SIFF, FMLA…LGKL, WGIG…PVLV, and HLSL…IFGA. RCK C-terminal domains follow at residues 202–288 and 290–373; these read LDVD…NFRD and KEVF…RIGF. Helical transmembrane passes span 383–403, 406–426, 447–467, 478–498, and 537–557; these read LLAF…TIQF, FTFG…LGFL, FGLM…INSS, SGLI…AYVL, and GTYA…VVIW.

It belongs to the AAE transporter (TC 2.A.81) family. YbjL subfamily.

Its subcellular location is the cell membrane. This chain is Putative transport protein ECA2683, found in Pectobacterium atrosepticum (strain SCRI 1043 / ATCC BAA-672) (Erwinia carotovora subsp. atroseptica).